We begin with the raw amino-acid sequence, 381 residues long: 6-oxocyclohex-1-ene-1-carbonyl-CoA hydrolase (381 aa).

Belongs to the enoyl-CoA hydratase/isomerase family. Homohexamer.

The enzyme catalyses 6-oxocyclohex-1-ene-1-carbonyl-CoA + 2 H2O = 3-hydroxy-6-carboxyhexanoyl-CoA + H(+). It participates in aromatic compound metabolism; benzoyl-CoA degradation. In terms of biological role, involved in the central benzoyl-CoA catabolism. Catalyzes the addition of one molecule of water to the double bond and the hydrolytic cleavage of C-C bond in the alicyclic ring, 6-oxocyclohex-1-ene-1-carbonyl-CoA (6-OCH-CoA) to yield 3-hydroxypimelyl-CoA. This is 6-oxocyclohex-1-ene-1-carbonyl-CoA hydrolase from Geobacter metallireducens (strain ATCC 53774 / DSM 7210 / GS-15).